The sequence spans 444 residues: Glucoside xylosyltransferase 2 (444 aa).

The Cytoplasmic segment spans residues 1–4 (MKLR). A helical; Signal-anchor for type II membrane protein membrane pass occupies residues 5-25 (SKAAALLLLALAVLLLALLSL). The Lumenal portion of the chain corresponds to 26–444 (RARRDPEPPG…IIHMGPNPMS (419 aa)). Positions 31–101 (PEPPGFPARP…LARRPGETRS (71 aa)) are disordered. Over residues 68 to 83 (RSPRRQPPRLRPRAGR) the composition is skewed to basic residues. The segment covering 87-101 (ASREKLARRPGETRS) has biased composition (basic and acidic residues). N275 carries N-linked (GlcNAc...) asparagine glycosylation.

This sequence belongs to the glycosyltransferase 8 family.

It is found in the membrane. The catalysed reaction is 3-O-(beta-D-glucosyl)-L-seryl-[EGF-like domain protein] + UDP-alpha-D-xylose = 3-O-[alpha-D-xylosyl-(1-&gt;3)-beta-D-glucosyl]-L-seryl-[EGF-like domain protein] + UDP + H(+). Glycosyltransferase which elongates the O-linked glucose attached to EGF-like repeats in the extracellular domain of Notch proteins by catalyzing the addition of xylose. This chain is Glucoside xylosyltransferase 2 (Gxylt2), found in Mus musculus (Mouse).